We begin with the raw amino-acid sequence, 134 residues long: Profilin-2 (134 aa).

An intrachain disulfide couples Cys-13 to Cys-118. Residues 84–100 (AVIRGKKGSGGITIKKT) carry the Involved in PIP2 interaction motif. The residue at position 114 (Thr-114) is a Phosphothreonine.

It belongs to the profilin family. In terms of assembly, occurs in many kinds of cells as a complex with monomeric actin in a 1:1 ratio. Post-translationally, phosphorylated by MAP kinases.

The protein localises to the cytoplasm. The protein resides in the cytoskeleton. Functionally, binds to actin and affects the structure of the cytoskeleton. At high concentrations, profilin prevents the polymerization of actin, whereas it enhances it at low concentrations. This is Profilin-2 from Olea europaea (Common olive).